An 81-amino-acid chain; its full sequence is Large ribosomal subunit protein bL31B (81 aa).

It belongs to the bacterial ribosomal protein bL31 family. Type B subfamily. As to quaternary structure, part of the 50S ribosomal subunit.

The polypeptide is Large ribosomal subunit protein bL31B (Limosilactobacillus reuteri (strain DSM 20016) (Lactobacillus reuteri)).